The chain runs to 217 residues: Large ribosomal subunit protein uL4 (217 aa).

The protein belongs to the universal ribosomal protein uL4 family. Part of the 50S ribosomal subunit.

Its function is as follows. One of the primary rRNA binding proteins, this protein initially binds near the 5'-end of the 23S rRNA. It is important during the early stages of 50S assembly. It makes multiple contacts with different domains of the 23S rRNA in the assembled 50S subunit and ribosome. In terms of biological role, forms part of the polypeptide exit tunnel. This chain is Large ribosomal subunit protein uL4, found in Koribacter versatilis (strain Ellin345).